The chain runs to 417 residues: MTASVNSLDLAAIRADFPILKRIMRGGNPLAYLDSGATSQRPLQVLDAEREFLTASNGAVHRGAHQLMEEATDAYEQGRADIALFVGADTDELVFTKNATEALNLVSYVLGDSRFERAVGPGDVIVTTELEHHANLIPWQELARRTGATLRWYGVTDDGRIDLDSLYLDDRVKVVAFTHHSNVTGVLTPVSELVSRAHQSGALTVLDACQSVPHQPVDLHELGVDFAAFSGHKMLGPNGIGVLYGRRELLAQMPPFLTGGSMIETVTMEGATYAPAPQRFEAGTPMTSQVVGLAAAARYLGAIGMAAVEAHERELVAAAIEGLSGIDGVRILGPTSMRDRGSPVAFVVEGVHAHDVGQVLDDGGVAVRVGHHCALPLHRRFGLAATARASFAVYNTADEVDRLVAGVRRSRHFFGRA.

Lysine 233 bears the N6-(pyridoxal phosphate)lysine mark. Cysteine 373 serves as the catalytic Cysteine persulfide intermediate.

This sequence belongs to the class-V pyridoxal-phosphate-dependent aminotransferase family. Csd subfamily. Requires pyridoxal 5'-phosphate as cofactor.

It catalyses the reaction (sulfur carrier)-H + L-cysteine = (sulfur carrier)-SH + L-alanine. Functionally, catalyzes the removal of elemental sulfur and selenium atoms from L-cysteine, L-cystine, L-selenocysteine, and L-selenocystine to produce L-alanine. This Mycobacterium tuberculosis (strain CDC 1551 / Oshkosh) protein is Probable cysteine desulfurase (csd).